A 477-amino-acid polypeptide reads, in one-letter code: Acylamidase (477 aa).

Active-site charge relay system residues include Lys-82 and Ser-157. Ser-181 acts as the Acyl-ester intermediate in catalysis.

It belongs to the amidase family.

The catalysed reaction is a monocarboxylic acid amide + H2O = a monocarboxylate + NH4(+). It carries out the reaction an anilide + H2O = aniline + a carboxylate + H(+). The enzyme catalyses an N-acyl-L-amino acid + H2O = an L-alpha-amino acid + a carboxylate. It catalyses the reaction an N-acetyl-L-cysteine-S-conjugate + H2O = an S-substituted L-cysteine + acetate. Its activity is regulated as follows. Amidase activity is completely suppressed by inhibitors of serine proteases (phenylmethylsulfonyl fluoride and diisopropyl fluorophosphate), partially inhibited by copper and mercury ions, but is not affected by inhibitors of aliphatic amidases (acetaldehyde and nitrophenyl disulfides) or by EDTA. Functionally, amidase with broad substrate specificity, catalyzing the hydrolysis of a wide range of N-substituted amides, and, to a lesser extent, the hydrolysis of non-substituted amides. Acid para-nitroanilides (4'-nitroacetanilide, Gly-pNA, Ala-pNA, Leu-pNA) are the best substrates for this enzyme. N-substituted acrylamides (isopropyl acrylamide, N,N-dimethyl-aminopropyl acrylamide, and methylene-bis-acrylamide), N-acetyl derivatives of glycine, alanine and leucine, and aliphatic amides (acetamide, acrylamide, isobutyramide, n-butyramide, and valeramide) can also be used as substrates but with less efficiency. This Rhodococcus erythropolis (Arthrobacter picolinophilus) protein is Acylamidase.